The sequence spans 295 residues: Signal-transducing adaptor protein 1 (295 aa).

Residues 25 to 121 (PLYFEGFLLI…WRGFILTVTE (97 aa)) form the PH domain. Tyr168 carries the post-translational modification Phosphotyrosine. The 104-residue stretch at 177–280 (ACFYTVSRKE…TDENTGQEPS (104 aa)) folds into the SH2 domain. The segment at 270–295 (STDENTGQEPSMEGRSEKLKKNPHIA) is disordered.

As to quaternary structure, interacts with KIT and CSF1R. Interacts with URI1; the interaction is phosphorylation-dependent and occurs in a growth-dependent manner. In terms of processing, phosphorylated on tyrosine by TEC. Phosphorylated on tyrosine by KIT.

The protein resides in the nucleus. It is found in the cytoplasm. It localises to the mitochondrion. Functionally, in BCR signaling, appears to function as a docking protein acting downstream of TEC and participates in a positive feedback loop by increasing the activity of TEC. In Homo sapiens (Human), this protein is Signal-transducing adaptor protein 1 (STAP1).